The following is a 657-amino-acid chain: Threonine--tRNA ligase (657 aa).

Residues 7 to 70 (ILAVIALTLP…TADAAIEIIT (64 aa)) form the TGS domain. Residues 253–555 (DHRKLGAELE…LIEHTAGNFP (303 aa)) form a catalytic region. Cysteine 351, histidine 402, and histidine 532 together coordinate Zn(2+).

The protein belongs to the class-II aminoacyl-tRNA synthetase family. Homodimer. Requires Zn(2+) as cofactor.

It is found in the cytoplasm. It carries out the reaction tRNA(Thr) + L-threonine + ATP = L-threonyl-tRNA(Thr) + AMP + diphosphate + H(+). Catalyzes the attachment of threonine to tRNA(Thr) in a two-step reaction: L-threonine is first activated by ATP to form Thr-AMP and then transferred to the acceptor end of tRNA(Thr). Also edits incorrectly charged L-seryl-tRNA(Thr). The chain is Threonine--tRNA ligase from Pelodictyon phaeoclathratiforme (strain DSM 5477 / BU-1).